Here is a 144-residue protein sequence, read N- to C-terminus: L-fucose mutarotase (144 aa).

The active-site Proton donor is His-22. Substrate is bound by residues Asp-30, Arg-109, and 131 to 133 (YGN).

The protein belongs to the RbsD / FucU family. FucU mutarotase subfamily. As to quaternary structure, homodecamer.

It localises to the cytoplasm. It carries out the reaction alpha-L-fucose = beta-L-fucose. The protein operates within carbohydrate metabolism; L-fucose metabolism. Its function is as follows. Involved in the anomeric conversion of L-fucose. This Haemophilus influenzae (strain PittGG) protein is L-fucose mutarotase.